We begin with the raw amino-acid sequence, 368 residues long: F-box only protein 28 (368 aa).

The segment covering 1 to 11 has biased composition (basic and acidic residues); it reads MAAAAEERMAE. A disordered region spans residues 1 to 56; the sequence is MAAAAEERMAEEGGGGQGDGGSSLASGSTQRQPPPPAPQHPQPGSQALPAPALAPD. Residues 12–21 show a composition bias toward gly residues; the sequence is EGGGGQGDGG. Positions 22 to 31 are enriched in low complexity; sequence SSLASGSTQR. Pro residues predominate over residues 32-41; sequence QPPPPAPQHP. Residues 42 to 56 are compositionally biased toward low complexity; the sequence is QPGSQALPAPALAPD. The 49-residue stretch at 61–109 folds into the F-box domain; the sequence is NNTLVALPIVAIENILSFMSYDEISQLRLVCKRMDLVCQRMLNQGFLKV. S235 and S242 each carry phosphoserine. A Phosphothreonine modification is found at T270. The interval 328 to 368 is disordered; that stretch reads MESAVGNSSGSGQNEESPRKRKKATEAIDSLRKSKRLRNRK. Low complexity predominate over residues 333–342; sequence GNSSGSGQNE. The residue at position 344 (S344) is a Phosphoserine.

As to quaternary structure, part of a SCF (SKP1-cullin-F-box) protein ligase complex.

The protein resides in the chromosome. The protein localises to the centromere. Its subcellular location is the kinetochore. In terms of biological role, probably recognizes and binds to some phosphorylated proteins and promotes their ubiquitination and degradation. The sequence is that of F-box only protein 28 (FBXO28) from Homo sapiens (Human).